Here is a 396-residue protein sequence, read N- to C-terminus: Acetylornithine aminotransferase 2 (396 aa).

Residues 102-103 (GA) and phenylalanine 134 contribute to the pyridoxal 5'-phosphate site. Arginine 137 lines the N(2)-acetyl-L-ornithine pocket. Residue 219 to 222 (DEVQ) coordinates pyridoxal 5'-phosphate. Lysine 248 carries the N6-(pyridoxal phosphate)lysine modification. Threonine 276 is a pyridoxal 5'-phosphate binding site.

This sequence belongs to the class-III pyridoxal-phosphate-dependent aminotransferase family. ArgD subfamily. As to quaternary structure, homodimer. Pyridoxal 5'-phosphate serves as cofactor.

Its subcellular location is the cytoplasm. The catalysed reaction is N(2)-acetyl-L-ornithine + 2-oxoglutarate = N-acetyl-L-glutamate 5-semialdehyde + L-glutamate. The protein operates within amino-acid biosynthesis; L-arginine biosynthesis; N(2)-acetyl-L-ornithine from L-glutamate: step 4/4. In Bordetella parapertussis (strain 12822 / ATCC BAA-587 / NCTC 13253), this protein is Acetylornithine aminotransferase 2.